We begin with the raw amino-acid sequence, 103 residues long: Astacin-like peptidase p16 (103 aa).

Residues 1–103 (NAIPGQHYRW…DAFSRDGSPM (103 aa)) enclose the Peptidase M12A domain.

The cofactor is Zn(2+).

In terms of biological role, active against casein. Has a role as a digestive enzyme. This is Astacin-like peptidase p16 from Argiope aurantia (Black-and-yellow garden spider).